Reading from the N-terminus, the 66-residue chain is Large ribosomal subunit protein bL35 (66 aa).

The segment at 1-42 (MPKQKTHRASAKRFKRTANGGLKRHHAYTGHRFHGKTKKQRR) is disordered.

The protein belongs to the bacterial ribosomal protein bL35 family.

This chain is Large ribosomal subunit protein bL35, found in Lactobacillus gasseri (strain ATCC 33323 / DSM 20243 / BCRC 14619 / CIP 102991 / JCM 1131 / KCTC 3163 / NCIMB 11718 / NCTC 13722 / AM63).